A 78-amino-acid chain; its full sequence is Protein DsvD (78 aa).

This sequence to A.fulgidus DsrD.

Its function is as follows. May play an essential role in dissimilatory sulfite reduction. In Nitratidesulfovibrio vulgaris (strain ATCC 29579 / DSM 644 / CCUG 34227 / NCIMB 8303 / VKM B-1760 / Hildenborough) (Desulfovibrio vulgaris), this protein is Protein DsvD (dsvD).